The chain runs to 228 residues: Clathrin light chain B (228 aa).

The residue at position 1 (Met-1) is a Blocked amino end (Met). Residues 1 to 17 (MADDFGFFSSSESGAPE) show a composition bias toward low complexity. The segment at 1 to 80 (MADDFGFFSS…VNGDVFQEAN (80 aa)) is disordered. Residues Ser-11 and Ser-13 each carry the phosphoserine modification. The segment at 92–154 (ADRLTQEPES…QVEKNKINNR (63 aa)) is involved in binding clathrin heavy chain. Thr-186 bears the Phosphothreonine mark. Cys-198 and Cys-208 form a disulfide bridge. Position 203 is an N6-acetyllysine (Lys-203). Ser-216 bears the Phosphoserine mark.

It belongs to the clathrin light chain family. In terms of assembly, clathrin coats are formed from molecules containing 3 heavy chains and 3 light chains. Interacts (via N-terminus) with HIP1. Interacts with HIP1R.

Its subcellular location is the cytoplasmic vesicle membrane. It localises to the membrane. The protein resides in the coated pit. Clathrin is the major protein of the polyhedral coat of coated pits and vesicles. In Bos taurus (Bovine), this protein is Clathrin light chain B (CLTB).